The sequence spans 613 residues: Dihydroxy-acid dehydratase (613 aa).

Position 81 (Asp81) interacts with Mg(2+). Residue Cys122 coordinates [2Fe-2S] cluster. Mg(2+) contacts are provided by Asp123 and Lys124. Position 124 is an N6-carboxylysine (Lys124). Cys195 lines the [2Fe-2S] cluster pocket. Glu491 provides a ligand contact to Mg(2+). Ser517 acts as the Proton acceptor in catalysis.

The protein belongs to the IlvD/Edd family. In terms of assembly, homodimer. The cofactor is [2Fe-2S] cluster. Mg(2+) serves as cofactor.

It carries out the reaction (2R)-2,3-dihydroxy-3-methylbutanoate = 3-methyl-2-oxobutanoate + H2O. It catalyses the reaction (2R,3R)-2,3-dihydroxy-3-methylpentanoate = (S)-3-methyl-2-oxopentanoate + H2O. It functions in the pathway amino-acid biosynthesis; L-isoleucine biosynthesis; L-isoleucine from 2-oxobutanoate: step 3/4. The protein operates within amino-acid biosynthesis; L-valine biosynthesis; L-valine from pyruvate: step 3/4. Its function is as follows. Functions in the biosynthesis of branched-chain amino acids. Catalyzes the dehydration of (2R,3R)-2,3-dihydroxy-3-methylpentanoate (2,3-dihydroxy-3-methylvalerate) into 2-oxo-3-methylpentanoate (2-oxo-3-methylvalerate) and of (2R)-2,3-dihydroxy-3-methylbutanoate (2,3-dihydroxyisovalerate) into 2-oxo-3-methylbutanoate (2-oxoisovalerate), the penultimate precursor to L-isoleucine and L-valine, respectively. The sequence is that of Dihydroxy-acid dehydratase from Aeromonas hydrophila subsp. hydrophila (strain ATCC 7966 / DSM 30187 / BCRC 13018 / CCUG 14551 / JCM 1027 / KCTC 2358 / NCIMB 9240 / NCTC 8049).